The sequence spans 242 residues: uncharacterized protein (242 aa).

Disordered stretches follow at residues 43–70 and 112–162; these read SRRS…TSKD and RMSR…VTPR. The segment covering 58–70 has biased composition (polar residues); that stretch reads QSVSGRKNSTSKD. 2 stretches are compositionally biased toward low complexity: residues 122 to 139 and 147 to 162; these read ERAA…AGHA and ADGA…VTPR.

This is an uncharacterized protein from Homo sapiens (Human).